We begin with the raw amino-acid sequence, 947 residues long: Isoleucine--tRNA ligase (947 aa).

Residues Pro-57 to His-67 carry the 'HIGH' region motif. Glu-568 is a binding site for L-isoleucyl-5'-AMP. The 'KMSKS' region signature appears at Lys-609 to Ser-613. Lys-612 serves as a coordination point for ATP. Zn(2+)-binding residues include Cys-908, Cys-911, Cys-926, and Cys-929.

It belongs to the class-I aminoacyl-tRNA synthetase family. IleS type 1 subfamily. As to quaternary structure, monomer. Zn(2+) is required as a cofactor.

Its subcellular location is the cytoplasm. The catalysed reaction is tRNA(Ile) + L-isoleucine + ATP = L-isoleucyl-tRNA(Ile) + AMP + diphosphate. In terms of biological role, catalyzes the attachment of isoleucine to tRNA(Ile). As IleRS can inadvertently accommodate and process structurally similar amino acids such as valine, to avoid such errors it has two additional distinct tRNA(Ile)-dependent editing activities. One activity is designated as 'pretransfer' editing and involves the hydrolysis of activated Val-AMP. The other activity is designated 'posttransfer' editing and involves deacylation of mischarged Val-tRNA(Ile). The protein is Isoleucine--tRNA ligase of Persephonella marina (strain DSM 14350 / EX-H1).